A 337-amino-acid polypeptide reads, in one-letter code: uncharacterized protein (337 aa).

The span at 42 to 66 (SHSVSPSPSPSDFSSSSSSSSSSPS) shows a compositional bias: low complexity. Positions 42-68 (SHSVSPSPSPSDFSSSSSSSSSSPSTF) are disordered. One can recognise an Exonuclease domain in the interval 129–304 (FLVIDLEGKV…DDTKNITRVV (176 aa)). Mg(2+) contacts are provided by Asp133, Glu135, and Asp234. The Proton acceptor role is filled by Glu135. Glu135 serves as a coordination point for AMP. His291 serves as the catalytic Proton acceptor. His291 provides a ligand contact to AMP. Asp296 is a binding site for Mg(2+).

This is an uncharacterized protein from Arabidopsis thaliana (Mouse-ear cress).